Consider the following 522-residue polypeptide: Protein disulfide-isomerase (522 aa).

The or 22 signal peptide spans 1–28; that stretch reads MKFSAGAVLSWSSLLLASSVFAQQEAVA. Residues 29–141 form the Thioredoxin 1 domain; the sequence is PEDSAVVKLA…VQFMIKQSQP (113 aa). Catalysis depends on nucleophile residues C61 and C64. A disulfide bridge links C61 with C64. 4 N-linked (GlcNAc...) asparagine glycosylation sites follow: N82, N117, N155, and N174. Residues 356–485 enclose the Thioredoxin 2 domain; sequence FLKGDASPIV…LFDFIKENGH (130 aa). Active-site nucleophile residues include C406 and C409. A disulfide bridge connects residues C406 and C409. An N-linked (GlcNAc...) asparagine glycan is attached at N425. The tract at residues 497–522 is disordered; sequence AQEKAAEEADADAELADEEDAIHDEL. Positions 504–522 are enriched in acidic residues; that stretch reads EADADAELADEEDAIHDEL. The short motif at 519–522 is the Prevents secretion from ER element; sequence HDEL.

The protein belongs to the protein disulfide isomerase family. In terms of assembly, interacts with EPS1, KAR2 and MNL1. Post-translationally, the N-terminus is blocked.

It is found in the endoplasmic reticulum lumen. The catalysed reaction is Catalyzes the rearrangement of -S-S- bonds in proteins.. Functionally, protein disulfide isomerase of ER lumen required for formation of disulfide bonds in secretory and cell-surface proteins and which unscrambles non-native disulfide bonds. Forms a complex with MNL1 to process unfolded protein-bound Man8GlcNAc2 oligosaccharides to Man7GlcNAc2, promoting degradation in unfolded protein response. In Saccharomyces cerevisiae (strain ATCC 204508 / S288c) (Baker's yeast), this protein is Protein disulfide-isomerase (PDI1).